The following is a 341-amino-acid chain: UDP-3-O-acylglucosamine N-acyltransferase (341 aa).

The active-site Proton acceptor is the His239.

The protein belongs to the transferase hexapeptide repeat family. LpxD subfamily. Homotrimer.

It carries out the reaction a UDP-3-O-[(3R)-3-hydroxyacyl]-alpha-D-glucosamine + a (3R)-hydroxyacyl-[ACP] = a UDP-2-N,3-O-bis[(3R)-3-hydroxyacyl]-alpha-D-glucosamine + holo-[ACP] + H(+). The protein operates within bacterial outer membrane biogenesis; LPS lipid A biosynthesis. Catalyzes the N-acylation of UDP-3-O-acylglucosamine using 3-hydroxyacyl-ACP as the acyl donor. Is involved in the biosynthesis of lipid A, a phosphorylated glycolipid that anchors the lipopolysaccharide to the outer membrane of the cell. The sequence is that of UDP-3-O-acylglucosamine N-acyltransferase from Idiomarina loihiensis (strain ATCC BAA-735 / DSM 15497 / L2-TR).